The sequence spans 199 residues: Superoxide dismutase [Fe] (199 aa).

Fe cation is bound by residues histidine 27, histidine 79, aspartate 161, and histidine 165.

This sequence belongs to the iron/manganese superoxide dismutase family. In terms of assembly, homodimer. It depends on Fe cation as a cofactor.

It catalyses the reaction 2 superoxide + 2 H(+) = H2O2 + O2. Its function is as follows. Destroys superoxide anion radicals which are normally produced within the cells and which are toxic to biological systems. The chain is Superoxide dismutase [Fe] (sodB) from Synechocystis sp. (strain ATCC 27184 / PCC 6803 / Kazusa).